Reading from the N-terminus, the 134-residue chain is Small ribosomal subunit protein uS8c (134 aa).

This sequence belongs to the universal ribosomal protein uS8 family. In terms of assembly, part of the 30S ribosomal subunit.

It is found in the plastid. It localises to the chloroplast. One of the primary rRNA binding proteins, it binds directly to 16S rRNA central domain where it helps coordinate assembly of the platform of the 30S subunit. This is Small ribosomal subunit protein uS8c (rps8) from Phaseolus angularis (Azuki bean).